A 162-amino-acid polypeptide reads, in one-letter code: Endoribonuclease YbeY (162 aa).

Zn(2+)-binding residues include His-128, His-132, and His-138.

It belongs to the endoribonuclease YbeY family. The cofactor is Zn(2+).

The protein resides in the cytoplasm. In terms of biological role, single strand-specific metallo-endoribonuclease involved in late-stage 70S ribosome quality control and in maturation of the 3' terminus of the 16S rRNA. The sequence is that of Endoribonuclease YbeY from Lactococcus lactis subsp. cremoris (strain MG1363).